The chain runs to 314 residues: Hydroxyacyl-coenzyme A dehydrogenase, mitochondrial (314 aa).

The transit peptide at 1–12 (MAFVTRQFMRSV) directs the protein to the mitochondrion. NAD(+) contacts are provided by residues 34–39 (GGGLMG) and Asp-57. Positions 73 and 80 each coordinate CoA. Lys-80 bears the N6-succinyllysine mark. Residues Lys-81 and Lys-87 each carry the N6-acetyllysine; alternate modification. An N6-succinyllysine; alternate mark is found at Lys-81 and Lys-87. NAD(+) is bound at residue Glu-122. At Lys-125 the chain carries N6-acetyllysine. Lys-127 lines the NAD(+) pocket. Lys-127 is subject to N6-(2-hydroxyisobutyryl)lysine. Position 136 is an N6-acetyllysine; alternate (Lys-136). N6-succinyllysine; alternate is present on Lys-136. Ser-149 and Asn-173 together coordinate NAD(+). A CoA-binding site is contributed by Ser-149. An N6-acetyllysine modification is found at Lys-179. Lys-185, Lys-192, and Lys-202 each carry N6-acetyllysine; alternate. An N6-succinyllysine; alternate mark is found at Lys-185, Lys-192, and Lys-202. At Lys-206 the chain carries N6-succinyllysine. Lys-212 and Lys-241 each carry N6-acetyllysine; alternate. 2 positions are modified to N6-succinyllysine; alternate: Lys-212 and Lys-241. An NAD(+)-binding site is contributed by Lys-305. Lys-312 is subject to N6-acetyllysine; alternate. Lys-312 is modified (N6-succinyllysine; alternate).

This sequence belongs to the 3-hydroxyacyl-CoA dehydrogenase family. As to quaternary structure, homodimer. Interacts with GLUD1; this interaction inhibits the activation of glutamate dehydrogenase 1 (GLUD1). In terms of processing, succinylation at Lys-81, adjacent to a coenzyme A binding site. Desuccinylated by SIRT5. Expressed in liver, kidney, pancreas, heart and skeletal muscle.

It is found in the mitochondrion matrix. The enzyme catalyses a (3S)-3-hydroxyacyl-CoA + NAD(+) = a 3-oxoacyl-CoA + NADH + H(+). It catalyses the reaction (3S)-3-hydroxybutanoyl-CoA + NAD(+) = acetoacetyl-CoA + NADH + H(+). It carries out the reaction (3S)-hydroxydecanoyl-CoA + NAD(+) = 3-oxodecanoyl-CoA + NADH + H(+). The catalysed reaction is (3S)-hydroxyhexadecanoyl-CoA + NAD(+) = 3-oxohexadecanoyl-CoA + NADH + H(+). It participates in lipid metabolism; fatty acid beta-oxidation. Functionally, mitochondrial fatty acid beta-oxidation enzyme that catalyzes the third step of the beta-oxidation cycle for medium and short-chain 3-hydroxy fatty acyl-CoAs (C4 to C10). Plays a role in the control of insulin secretion by inhibiting the activation of glutamate dehydrogenase 1 (GLUD1), an enzyme that has an important role in regulating amino acid-induced insulin secretion. Plays a role in the maintenance of normal spermatogenesis through the reduction of fatty acid accumulation in the testes. In Homo sapiens (Human), this protein is Hydroxyacyl-coenzyme A dehydrogenase, mitochondrial (HADH).